Consider the following 822-residue polypeptide: Microcephalin (822 aa).

Residues 10–99 (AFLKDVVAYV…ALVDESLFPA (90 aa)) form the BRCT 1 domain. 3 disordered regions span residues 182–203 (MKEKRENLSPTSSQMLEQSQQN), 219–243 (PLSSDESFASGSHSSFGDSCGDQER), and 266–295 (SSFYGSASPNHLRQPRPQKAPDSPSKESIN). Polar residues-rich tracts occupy residues 189–203 (LSPTSSQMLEQSQQN) and 219–235 (PLSSDESFASGSHSSFG). 3 positions are modified to phosphoserine: Ser-273, Ser-290, and Ser-327. Thr-329 bears the Phosphothreonine mark. Disordered stretches follow at residues 335-366 (EHQVRLGPKNSSAKRKRAADLGSSPKGKLKKR), 498-567 (NDSP…SPED), and 594-636 (TGYS…PTRT). Over residues 522-541 (HPDTLSSSAHHITPLKGNST) the composition is skewed to polar residues. 2 stretches are compositionally biased toward basic and acidic residues: residues 542 to 553 (ETRDPGDGKGSP) and 625 to 634 (KKSEKEEKPT). BRCT domains follow at residues 627–717 (SEKE…PFEL) and 738–820 (YQGT…NYQL).

As to quaternary structure, interacts with CDC27 and maybe other components of the APC/C complex. Interacts with histone variant H2AX under DNA damage conditions. In terms of tissue distribution, high levels of expression are found in the developing forebrain and, in particular, in the walls of the lateral ventricles.

It localises to the cytoplasm. Its subcellular location is the cytoskeleton. The protein resides in the microtubule organizing center. The protein localises to the centrosome. Its function is as follows. Implicated in chromosome condensation and DNA damage induced cellular responses. May play a role in neurogenesis and regulation of the size of the cerebral cortex. The protein is Microcephalin of Mus musculus (Mouse).